A 357-amino-acid polypeptide reads, in one-letter code: tRNA-specific 2-thiouridylase MnmA (357 aa).

ATP is bound by residues 6–13 (AMSGGVDS) and Leu-32. The Nucleophile role is filled by Cys-101. Cys-101 and Cys-193 are oxidised to a cystine. Gly-125 is a binding site for ATP. Residues 143-145 (KDQ) are interaction with tRNA. Cys-193 (cysteine persulfide intermediate) is an active-site residue.

It belongs to the MnmA/TRMU family.

The protein resides in the cytoplasm. It carries out the reaction S-sulfanyl-L-cysteinyl-[protein] + uridine(34) in tRNA + AH2 + ATP = 2-thiouridine(34) in tRNA + L-cysteinyl-[protein] + A + AMP + diphosphate + H(+). Functionally, catalyzes the 2-thiolation of uridine at the wobble position (U34) of tRNA, leading to the formation of s(2)U34. This chain is tRNA-specific 2-thiouridylase MnmA, found in Mycolicibacterium vanbaalenii (strain DSM 7251 / JCM 13017 / BCRC 16820 / KCTC 9966 / NRRL B-24157 / PYR-1) (Mycobacterium vanbaalenii).